The chain runs to 349 residues: Carbamoyl phosphate synthase small chain (349 aa).

The CPSase stretch occupies residues 1–170 (MKAKLILENG…KYEISGEGKK (170 aa)). L-glutamine is bound by residues Ser-45, Gly-218, and Gly-220. The region spanning 170 to 349 (KVAIIDFGIK…IFDEFMKYAL (180 aa)) is the Glutamine amidotransferase type-1 domain. Cys-245 (nucleophile) is an active-site residue. L-glutamine is bound by residues Leu-246, Gln-249, Asn-287, Gly-289, and Tyr-290. Catalysis depends on residues His-327 and Glu-329.

Belongs to the CarA family. In terms of assembly, composed of two chains; the small (or glutamine) chain promotes the hydrolysis of glutamine to ammonia, which is used by the large (or ammonia) chain to synthesize carbamoyl phosphate. Tetramer of heterodimers (alpha,beta)4.

It catalyses the reaction hydrogencarbonate + L-glutamine + 2 ATP + H2O = carbamoyl phosphate + L-glutamate + 2 ADP + phosphate + 2 H(+). It carries out the reaction L-glutamine + H2O = L-glutamate + NH4(+). It participates in amino-acid biosynthesis; L-arginine biosynthesis; carbamoyl phosphate from bicarbonate: step 1/1. The protein operates within pyrimidine metabolism; UMP biosynthesis via de novo pathway; (S)-dihydroorotate from bicarbonate: step 1/3. Small subunit of the glutamine-dependent carbamoyl phosphate synthetase (CPSase). CPSase catalyzes the formation of carbamoyl phosphate from the ammonia moiety of glutamine, carbonate, and phosphate donated by ATP, constituting the first step of 2 biosynthetic pathways, one leading to arginine and/or urea and the other to pyrimidine nucleotides. The small subunit (glutamine amidotransferase) binds and cleaves glutamine to supply the large subunit with the substrate ammonia. In Clostridium perfringens (strain 13 / Type A), this protein is Carbamoyl phosphate synthase small chain.